The chain runs to 139 residues: Large-conductance mechanosensitive channel (139 aa).

The next 3 helical transmembrane spans lie at 16–36, 40–60, and 79–99; these read VIDLAVGVIIGAAFNDIVKAL, IVMPPIGLVLSGIDFSDLAWV, and GAFINTCIRFLIVAWAVFMLV.

The protein belongs to the MscL family. In terms of assembly, homopentamer.

Its subcellular location is the cell inner membrane. Functionally, channel that opens in response to stretch forces in the membrane lipid bilayer. May participate in the regulation of osmotic pressure changes within the cell. The protein is Large-conductance mechanosensitive channel of Phenylobacterium zucineum (strain HLK1).